The following is a 293-amino-acid chain: MPEGKIVKALSGFYYVQHEEGITQCRGRGVFRKNKITPLVGDQVVFQADNPSEGYVLEVFDRKNELVRPPIANVDQAILVFSAVEPDFNPGLLDRFLVLIEYHNIKPIICISKMDLVDEKMRETVEAYANDYREMGYDVLFTSINTSESIDILKPFLEGCVSVVAGQSGVGKSSMLNVLRPELELKTNDISSHLGRGKHTTRHVELIAIGSGLVADTPGFSSLDFIDIEVEDLTYCFPELKEASQYCKFRGCTHLSEPKCAVKAAVEEGKITEYRYKNYKQFVEEIRERKPRY.

In terms of domain architecture, CP-type G spans K63–L223. GTP-binding positions include S112–D115 and G166–S174. Residues C247, C252, H254, and C260 each contribute to the Zn(2+) site.

This sequence belongs to the TRAFAC class YlqF/YawG GTPase family. RsgA subfamily. As to quaternary structure, monomer. Associates with 30S ribosomal subunit, binds 16S rRNA. It depends on Zn(2+) as a cofactor.

The protein localises to the cytoplasm. One of several proteins that assist in the late maturation steps of the functional core of the 30S ribosomal subunit. Helps release RbfA from mature subunits. May play a role in the assembly of ribosomal proteins into the subunit. Circularly permuted GTPase that catalyzes slow GTP hydrolysis, GTPase activity is stimulated by the 30S ribosomal subunit. This is Small ribosomal subunit biogenesis GTPase RsgA from Bacillus anthracis.